A 336-amino-acid chain; its full sequence is Fructose-1,6-bisphosphatase class 1 (336 aa).

4 residues coordinate Mg(2+): Glu90, Asp112, Leu114, and Asp115. Residues 115-118 (DGSS), Asn211, and Lys277 each bind substrate. Glu283 is a binding site for Mg(2+).

Belongs to the FBPase class 1 family. In terms of assembly, homotetramer. Requires Mg(2+) as cofactor.

It localises to the cytoplasm. It carries out the reaction beta-D-fructose 1,6-bisphosphate + H2O = beta-D-fructose 6-phosphate + phosphate. It functions in the pathway carbohydrate biosynthesis; gluconeogenesis. In Pseudomonas putida (strain W619), this protein is Fructose-1,6-bisphosphatase class 1.